Here is a 1069-residue protein sequence, read N- to C-terminus: Protocadherin-7 (1069 aa).

The N-terminal stretch at 1–28 (MLRMRTAGWARGWCLGCCLLLPLSLSLA) is a signal peptide. Cadherin domains lie at 29–143 (AAKQ…TPTF), 144–308 (PSPV…SPRF), 309–415 (EKSV…VPSI), 424–535 (PLKD…PPMF), 536–639 (GQSV…DPKF), 640–742 (MQDV…APTV), and 745–862 (PKNI…IPLT). Topologically, residues 29–879 (AAKQLLRYRL…SYEISKQRLS (851 aa)) are extracellular. Asn-79 carries N-linked (GlcNAc...) asparagine glycosylation. Positions 182–242 (LLQEPGGGGS…GGTNPGGRSS (61 aa)) are disordered. The segment covering 207–221 (PGGGGNGASGGGSGG) has biased composition (gly residues). N-linked (GlcNAc...) asparagine glycans are attached at residues Asn-689, Asn-747, Asn-780, Asn-822, Asn-840, and Asn-845. Residues 880 to 900 (IVIGVVAGIMTVILIILIVVM) form a helical membrane-spanning segment. Over 901 to 1069 (ARYCRSKNKN…RLHPYITVFG (169 aa)) the chain is Cytoplasmic. The disordered stretch occupies residues 910–988 (NGYEAGKKDH…RYRSVNGGPG (79 aa)). Positions 930–944 (KSKKPKKDKKNKKSK) are enriched in basic residues. 2 positions are modified to phosphoserine: Ser-989 and Ser-1011.

As to expression, expressed predominantly in brain and heart and at lower levels in various other tissues.

It is found in the cell membrane. This is Protocadherin-7 (PCDH7) from Homo sapiens (Human).